A 159-amino-acid chain; its full sequence is 6,7-dimethyl-8-ribityllumazine synthase (159 aa).

5-amino-6-(D-ribitylamino)uracil-binding positions include W30, 64-66 (TFE), and 88-90 (CVI). Position 93–94 (93–94 (ET)) interacts with (2S)-2-hydroxy-3-oxobutyl phosphate. H96 serves as the catalytic Proton donor. F121 is a binding site for 5-amino-6-(D-ribitylamino)uracil. R135 contacts (2S)-2-hydroxy-3-oxobutyl phosphate.

This sequence belongs to the DMRL synthase family.

The enzyme catalyses (2S)-2-hydroxy-3-oxobutyl phosphate + 5-amino-6-(D-ribitylamino)uracil = 6,7-dimethyl-8-(1-D-ribityl)lumazine + phosphate + 2 H2O + H(+). It participates in cofactor biosynthesis; riboflavin biosynthesis; riboflavin from 2-hydroxy-3-oxobutyl phosphate and 5-amino-6-(D-ribitylamino)uracil: step 1/2. Its function is as follows. Catalyzes the formation of 6,7-dimethyl-8-ribityllumazine by condensation of 5-amino-6-(D-ribitylamino)uracil with 3,4-dihydroxy-2-butanone 4-phosphate. This is the penultimate step in the biosynthesis of riboflavin. This Cytophaga hutchinsonii (strain ATCC 33406 / DSM 1761 / CIP 103989 / NBRC 15051 / NCIMB 9469 / D465) protein is 6,7-dimethyl-8-ribityllumazine synthase.